The sequence spans 189 residues: UPF0301 protein bbp_491 (189 aa).

This sequence belongs to the UPF0301 (AlgH) family.

In Buchnera aphidicola subsp. Baizongia pistaciae (strain Bp), this protein is UPF0301 protein bbp_491.